We begin with the raw amino-acid sequence, 402 residues long: Prophage integrase IntZ (402 aa).

A Core-binding (CB) domain is found at 103–183; that stretch reads AGFKKVAEDW…RIGEIFKFAV (81 aa). A Tyr recombinase domain is found at 206–381; sequence GHNAWIPISE…AYLKQRRAMM (176 aa). Residues Arg-244, Lys-271, His-332, Arg-335, and His-359 contribute to the active site. Residue Tyr-368 is the O-(3'-phospho-DNA)-tyrosine intermediate of the active site.

Belongs to the 'phage' integrase family.

In terms of biological role, integrase is necessary for integration of the phage into the host genome by site-specific recombination. In conjunction with excisionase, integrase is also necessary for excision of the prophage from the host genome. The sequence is that of Prophage integrase IntZ (intZ) from Escherichia coli (strain K12).